The following is a 329-amino-acid chain: Biotin synthase (329 aa).

Residues 48-278 (FLGTGVDLCS…DRKIAVCGGR (231 aa)) form the Radical SAM core domain. 3 residues coordinate [4Fe-4S] cluster: C66, C70, and C73. [2Fe-2S] cluster-binding residues include S143 and C203.

The protein belongs to the radical SAM superfamily. Biotin synthase family. Homodimer. It depends on [4Fe-4S] cluster as a cofactor. The cofactor is [2Fe-2S] cluster.

The enzyme catalyses (4R,5S)-dethiobiotin + (sulfur carrier)-SH + 2 reduced [2Fe-2S]-[ferredoxin] + 2 S-adenosyl-L-methionine = (sulfur carrier)-H + biotin + 2 5'-deoxyadenosine + 2 L-methionine + 2 oxidized [2Fe-2S]-[ferredoxin]. The protein operates within cofactor biosynthesis; biotin biosynthesis; biotin from 7,8-diaminononanoate: step 2/2. Functionally, catalyzes the conversion of dethiobiotin (DTB) to biotin by the insertion of a sulfur atom into dethiobiotin via a radical-based mechanism. The polypeptide is Biotin synthase (Geobacter sulfurreducens (strain ATCC 51573 / DSM 12127 / PCA)).